The chain runs to 483 residues: Pre-glycoprotein polyprotein GP complex (483 aa).

Gly2 carries the N-myristoyl glycine; by host lipid modification. Residues 2-17 are Extracellular-facing; it reads GQFISFMQEIPIFLQE. The chain crosses the membrane as a helical span at residues 18–32; that stretch reads ALNIALVAVSLICIV. Lys33 is a topological domain (cytoplasmic). A helical transmembrane segment spans residues 34–53; it reads GLVNLYRCGLFQLMVFLVLA. Extracellular segments lie at residues 54–58 and 59–422; these read GRSCS and EETF…TLVD. Cys57 serves as a coordination point for Zn(2+). N-linked (GlcNAc...) asparagine; by host glycosylation is found at Asn83 and Asn95. 6 disulfide bridges follow: Cys92–Cys224, Cys134–Cys162, Cys205–Cys211, Cys269–Cys282, Cys291–Cys300, and Cys354–Cys375. N-linked (GlcNAc...) asparagine; by host glycosylation is found at Asn164 and Asn176. N-linked (GlcNAc...) asparagine; by host glycans are attached at residues Asn355, Asn363, Asn380, and Asn385. Residues 423–443 traverse the membrane as a helical segment; the sequence is ICFWSTVFFTSTLFLHLIGFP. Residues 444–483 are Cytoplasmic-facing; sequence THEHIRGEGCPLPHRLNSMGGCRCGKYLPLKKPTIWHRRH. 7 residues coordinate Zn(2+): His445, His447, Cys453, His457, Cys465, Cys467, and His483.

The protein belongs to the arenaviridae GPC protein family. As to quaternary structure, homotetramer; disulfide-linked. Homotetramer. GP2 homotetramers bind through ionic interactions with GP1 homotetramers to form the GP complex together with the stable signal peptide. The GP-C polyprotein interacts with the host protease MBTPS1/SKI-1 resulting in the polyprotein processing. Specific enzymatic cleavages in vivo yield mature proteins. GP-C polyprotein is cleaved in the endoplasmic reticulum by the host protease MBTPS1. Only cleaved glycoprotein is incorporated into virions. In terms of processing, the SSP remains stably associated with the GP complex following cleavage by signal peptidase and plays crucial roles in the trafficking of GP through the secretory pathway. Post-translationally, myristoylation is necessary for GP2-mediated fusion activity.

The protein resides in the virion membrane. It localises to the host endoplasmic reticulum membrane. It is found in the host Golgi apparatus membrane. The protein localises to the host cell membrane. Functionally, class I viral fusion protein that directs fusion of viral and host endosomal membranes, leading to delivery of the nucleocapsid into the cytoplasm. Membrane fusion is mediated by irreversible conformational changes induced upon acidification in the endosome. In terms of biological role, stable signal peptide (SSP): cleaved and functions as a signal peptide. In addition, it is also retained as the third component of the GP complex. The SSP is required for efficient glycoprotein expression, post-translational maturation cleavage of GP1 and GP2, glycoprotein transport to the cell surface plasma membrane, formation of infectious virus particles, and acid pH-dependent glycoprotein-mediated cell fusion. Its function is as follows. Interacts with the host receptor. This is Pre-glycoprotein polyprotein GP complex from Artibeus (neotropical fruit bats).